Consider the following 302-residue polypeptide: UDP-N-acetylenolpyruvoylglucosamine reductase (302 aa).

The FAD-binding PCMH-type domain maps to 27–192; it reads KTGGPADYVA…VSVTFGLKPG (166 aa). The active site involves arginine 171. The active-site Proton donor is serine 221. Glutamate 291 is a catalytic residue.

Belongs to the MurB family. FAD serves as cofactor.

It is found in the cytoplasm. The enzyme catalyses UDP-N-acetyl-alpha-D-muramate + NADP(+) = UDP-N-acetyl-3-O-(1-carboxyvinyl)-alpha-D-glucosamine + NADPH + H(+). Its pathway is cell wall biogenesis; peptidoglycan biosynthesis. Its function is as follows. Cell wall formation. In Lactiplantibacillus plantarum (strain ATCC BAA-793 / NCIMB 8826 / WCFS1) (Lactobacillus plantarum), this protein is UDP-N-acetylenolpyruvoylglucosamine reductase.